We begin with the raw amino-acid sequence, 340 residues long: 4-dimethylallyltryptophan N-methyltransferase easF (340 aa).

The protein belongs to the methyltransferase superfamily. As to quaternary structure, homodimer.

It carries out the reaction 4-(3-methylbut-2-enyl)-L-tryptophan + S-adenosyl-L-methionine = 4-(3-methylbut-2-enyl)-L-abrine + S-adenosyl-L-homocysteine + H(+). It participates in alkaloid biosynthesis; ergot alkaloid biosynthesis. 4-dimethylallyltryptophan N-methyltransferase; part of the gene cluster that mediates the biosynthesis of fungal ergot alkaloid. DmaW catalyzes the first step of ergot alkaloid biosynthesis by condensing dimethylallyl diphosphate (DMAP) and tryptophan to form 4-dimethylallyl-L-tryptophan. The second step is catalyzed by the methyltransferase easF that methylates 4-dimethylallyl-L-tryptophan in the presence of S-adenosyl-L-methionine, resulting in the formation of 4-dimethylallyl-L-abrine. The catalase easC and the FAD-dependent oxidoreductase easE then transform 4-dimethylallyl-L-abrine to chanoclavine-I which is further oxidized by easD in the presence of NAD(+), resulting in the formation of chanoclavine-I aldehyde. Chanoclavine-I aldehyde is the precursor of ergoamides and ergopeptines in Clavicipitaceae, and clavine-type alcaloids such as fumiclavine in Trichocomaceae. However, the metabolites downstream of chanoclavine-I aldehyde in Arthrodermataceae have not been identified yet. The protein is 4-dimethylallyltryptophan N-methyltransferase easF of Trichophyton verrucosum (strain HKI 0517).